Here is a 109-residue protein sequence, read N- to C-terminus: Nucleoid-associated protein HAPS_1040 (109 aa).

The tract at residues 1–21 is disordered; it reads MFGKGGLGGLMKQAQQMQERM. Residues 10-19 are compositionally biased toward low complexity; it reads LMKQAQQMQE.

The protein belongs to the YbaB/EbfC family. Homodimer.

Its subcellular location is the cytoplasm. The protein resides in the nucleoid. Binds to DNA and alters its conformation. May be involved in regulation of gene expression, nucleoid organization and DNA protection. The protein is Nucleoid-associated protein HAPS_1040 of Glaesserella parasuis serovar 5 (strain SH0165) (Haemophilus parasuis).